We begin with the raw amino-acid sequence, 594 residues long: MAANMYRVGDYVYFENSSSNPYLIRRIEELNKTASGNVEAKVVCFYRRRDISNTLIMLADKHAKEIEEESETTVEADLTDKQKHQLKHRELFLSRQYESLPATHIRGKCSVALLNETESVLSYLDKEDTFFYSLVYDPSLKTLLADKGEIRVGPRYQADIPEMLLEGESDEREQSKLEVKVWDPNSPLTDRQIDQFLVVARAVGTFARALDCSSSVRQPSLHMSAAAASRDITLFHAMDTLYRHSYDLSSAISVLVPLGGPVLCRDEMEEWSASEASLFEEALEKYGKDFNDIRQDFLPWKSLTSIIEYYYMWKTTDRYVQQKRLKAAEAESKLKQVYIPTYSKPNPNQISTSNGKPGAVNGAVGTTFQPQNPLLGRACESCYATQSHQWYSWGPPNMQCRLCAICWLYWKKYGGLKMPTQSEEEKLSPSPTTEDPRVRSHVSRQAMQGMPVRNTGSPKSAVKTRQAFFLHTTYFTKFARQVCKNTLRLRQAARRPFVAINYAAIRAEYADRHAELSGSPLKSKSTRKPLACIIGYLEIHPAKKPNVIRSTPSLQTPTTKRMLTTPNHTSLSILGKRNYSHHNGLDELTCCVSD.

Residues 1 to 147 (MAANMYRVGD…PSLKTLLADK (147 aa)) form the BAH domain. In terms of domain architecture, ELM2 spans 148–259 (GEIRVGPRYQ…SAISVLVPLG (112 aa)). Residues 266–318 (DEMEEWSASEASLFEEALEKYGKDFNDIRQDFLPWKSLTSIIEYYYMWKTTDR) enclose the SANT domain. Residues 379–406 (CESCYATQSHQWYSWGPPNMQCRLCAIC) form a GATA-type; atypical zinc finger. S428 and S430 each carry phosphoserine. T455 carries the post-translational modification Phosphothreonine. S519 carries the post-translational modification Phosphoserine.

Belongs to the metastasis-associated protein family. In terms of assembly, component of the nucleosome remodeling and deacetylase (NuRD) repressor complex, composed of core proteins MTA1, MTA2, MTA3, RBBP4, RBBP7, HDAC1, HDAC2, MBD2, MBD3, and peripherally associated proteins CDK2AP1, CDK2AP2, GATAD2A, GATAD2B, CHD3, CHD4 and CHD5. The exact stoichiometry of the NuRD complex is unknown, and some subunits such as MBD2 and MBD3, GATAD2A and GATAD2B, and CHD3, CHD4 and CHD5 define mutually exclusive NuRD complexes. Interacts with BCL6. Interacts with NACC2. Interacts with PWWP2B. As to expression, expressed in germinal centers of lymphoid tissues. No expression in nonepithelial cells.

Its subcellular location is the nucleus. The protein localises to the cytoplasm. Its function is as follows. Acts as a component of the histone deacetylase NuRD complex which participates in the remodeling of chromatin. Plays a role in maintenance of the normal epithelial architecture through the repression of SNAI1 transcription in a histone deacetylase-dependent manner, and thus the regulation of E-cadherin levels. Contributes to transcriptional repression by BCL6. The protein is Metastasis-associated protein MTA3 (MTA3) of Homo sapiens (Human).